The sequence spans 292 residues: AhcY transcriptional activator HvrB (292 aa).

The HTH lysR-type domain maps to 10–67; it reads PPLTALRAFAATASEGGFSAAARKLNVTHAAIAQQVRALEADLDVPLVWRDGKHLHLT. The H-T-H motif DNA-binding region spans 27 to 46; that stretch reads FSAAARKLNVTHAAIAQQVR.

It belongs to the LysR transcriptional regulatory family.

Functions as a low-light activator of ahcY expression (gene for S-adenosyl-L-homocysteine hydrolase) and as a high-light activator of an uncharacterized 21.6 kDa protein in the ahcY-hvrB intergenic region (orf5). It is also a negative regulator of its own expression. This chain is AhcY transcriptional activator HvrB (hvrB), found in Rhodobacter capsulatus (strain ATCC BAA-309 / NBRC 16581 / SB1003).